The primary structure comprises 360 residues: MIATLERREGVSLWERFCAWITSTENRLYIGWFGCLMFPTLLTATSCFIIAFIAAPPVDIDGIREPVAGSLLYGNNIISGAVIPSSNAIGMHFYPIWEAASVDEWLYNGGPYQLIVLHFLLGVASYMGREWELSYRLGMRPWIFVAFSAPVAAASAVFLVYPIGQGSFSDGMPLGISGTFNFMLVFQAEHNILMHPFHMAGVAGVFGGSLFSAMHGSLVTSSLIRETTENESTNYGYKFGQEEETYNIVAAHGYFGRLIFQYASFNNSRALHFFLALWPVLGIWLTAMGISTMAFNLNGFNFNQSVVDSQGRVINTWADIINRADLGMEVMHERNAHNFPLDLASGDVLPVAFTAPAVNA.

3 helical membrane passes run 29–46 (YIGW…TATS), 118–133 (HFLL…EWEL), and 142–156 (WIFV…AASA). A chlorophyll a-binding site is contributed by His118. Tyr126 lines the pheophytin a pocket. [CaMn4O5] cluster-binding residues include Asp170 and Glu189. The chain crosses the membrane as a helical span at residues 197 to 218 (FHMAGVAGVFGGSLFSAMHGSL). Residue His198 participates in chlorophyll a binding. Residues His215 and 264–265 (SF) each bind a quinone. His215 is a binding site for Fe cation. Residue His272 participates in Fe cation binding. A helical transmembrane segment spans residues 274–288 (FLALWPVLGIWLTAM). [CaMn4O5] cluster contacts are provided by His332, Glu333, Asp342, and Ala344. Residues 345 to 360 (SGDVLPVAFTAPAVNA) constitute a propeptide that is removed on maturation.

Belongs to the reaction center PufL/M/PsbA/D family. As to quaternary structure, PSII is composed of 1 copy each of membrane proteins PsbA, PsbB, PsbC, PsbD, PsbE, PsbF, PsbH, PsbI, PsbJ, PsbK, PsbL, PsbM, PsbT, PsbX, PsbY, PsbZ, Psb30/Ycf12, at least 3 peripheral proteins of the oxygen-evolving complex and a large number of cofactors. It forms dimeric complexes. The D1/D2 heterodimer binds P680, chlorophylls that are the primary electron donor of PSII, and subsequent electron acceptors. It shares a non-heme iron and each subunit binds pheophytin, quinone, additional chlorophylls, carotenoids and lipids. D1 provides most of the ligands for the Mn4-Ca-O5 cluster of the oxygen-evolving complex (OEC). There is also a Cl(-1) ion associated with D1 and D2, which is required for oxygen evolution. The PSII complex binds additional chlorophylls, carotenoids and specific lipids. is required as a cofactor. Tyr-161 forms a radical intermediate that is referred to as redox-active TyrZ, YZ or Y-Z. In terms of processing, C-terminally processed by CTPA; processing is essential to allow assembly of the oxygen-evolving complex and thus photosynthetic growth.

The protein localises to the plastid. Its subcellular location is the chloroplast thylakoid membrane. It carries out the reaction 2 a plastoquinone + 4 hnu + 2 H2O = 2 a plastoquinol + O2. Functionally, photosystem II (PSII) is a light-driven water:plastoquinone oxidoreductase that uses light energy to abstract electrons from H(2)O, generating O(2) and a proton gradient subsequently used for ATP formation. It consists of a core antenna complex that captures photons, and an electron transfer chain that converts photonic excitation into a charge separation. The D1/D2 (PsbA/PsbD) reaction center heterodimer binds P680, the primary electron donor of PSII as well as several subsequent electron acceptors. The chain is Photosystem II protein D1 from Thalassiosira pseudonana (Marine diatom).